Reading from the N-terminus, the 504-residue chain is Patatin-like phospholipase domain-containing protein 2 (504 aa).

The Cytoplasmic portion of the chain corresponds to 1–8 (MFPREKTW). Residues 9-29 (NISFAGCGFLGVYYVGVASCL) form a helical membrane-spanning segment. Positions 10 to 179 (ISFAGCGFLG…SDNLPLYELK (170 aa)) constitute a PNPLA domain. The GXGXXG motif lies at 14-19 (GCGFLG). Over 30 to 42 (REHAPFLVANATH) the chain is Extracellular. N39 carries an N-linked (GlcNAc...) asparagine glycan. The helical transmembrane segment at 43 to 63 (IYGASAGALTATALVTGVCLG) threads the bilayer. Positions 45-49 (GASAG) match the GXSXG motif. S47 (nucleophile) is an active-site residue. Residues 64 to 137 (EAGAKFIEVS…IISHFNSKDE (74 aa)) lie on the Cytoplasmic side of the membrane. K92 participates in a covalent cross-link: Glycyl lysine isopeptide (Lys-Gly) (interchain with G-Cter in ubiquitin). A helical membrane pass occupies residues 138–158 (LIQANVCSGFIPVYCGLIPPS). Topologically, residues 159-329 (LQGVRYVDGG…TTLSNMLPVR (171 aa)) are extracellular. The active-site Proton acceptor is the D166. Residues 166–168 (DGG) carry the DGA/G motif. The chain crosses the membrane as a helical span at residues 330–350 (LATAMMVPYTLPLESALSFTI). At 351–504 (RLLEWLPDVP…ARPVIGALGL (154 aa)) the chain is on the cytoplasmic side. Phosphoserine; in vitro is present on S372. At S404 the chain carries Phosphoserine; by PKA and FAM20C. At S428 the chain carries Phosphoserine. Residues 463-492 (APADPAPAPADPASPQHQLAGPAPLLSTPA) form a disordered region.

Interacts with ABHD5; this association stimulates PNPLA2 triglyceride hydrolase activity. Interacts with SERPINF1; this interaction stimulates the phospholipase A2 activity of PNPLA2. Despite a colocalization in lipid droplets, it probably does not interact with PLIN. Interacts with PLIN5; prevents interaction with ABHD5. Interacts with FAF2. Phosphorylation at Ser-404 by PKA is increased during fasting and moderate intensity exercise, and moderately increases lipolytic activity. Phosphorylation at Ser-404 is increased upon beta-adrenergic stimulation. Post-translationally, ubiquitinated by PEX2 in response to reactive oxygen species (ROS), leading to its degradation. Ubiquitination is stimulated by LDAH. As to expression, highest expression in adipose tissue. Also detected in heart, skeletal muscle, and portions of the gastrointestinal tract. Detected in normal retina and retinoblastoma cells. Detected in retinal pigment epithelium and, at lower intensity, in the inner segments of photoreceptors and in the ganglion cell layer of the neural retina (at protein level).

The protein localises to the lipid droplet. The protein resides in the cell membrane. It is found in the cytoplasm. The catalysed reaction is a triacylglycerol + H2O = a diacylglycerol + a fatty acid + H(+). It catalyses the reaction a triacylglycerol + H2O = a 1,2-diacylglycerol + a fatty acid + H(+). It carries out the reaction a triacylglycerol + H2O = a 1,3-diacylglycerol + a fatty acid + H(+). The enzyme catalyses a triacyl-sn-glycerol + H2O = a 1,3-diacyl-sn-glycerol + a fatty acid + H(+). The catalysed reaction is a triacyl-sn-glycerol + H2O = a 2,3-diacyl-sn-glycerol + a fatty acid + H(+). It catalyses the reaction a 1-acylglycerol + a 1,3-diacylglycerol = a triacylglycerol + glycerol. It carries out the reaction a 1-acylglycerol + a 1,2-diacylglycerol = a triacylglycerol + glycerol. The enzyme catalyses 2 a 1-acylglycerol = a 1,2-diacylglycerol + glycerol. The catalysed reaction is a triacylglycerol + all-trans-retinol = an all-trans-retinyl ester + a diacylglycerol. It catalyses the reaction 1,2-di-(9Z-octadecenoyl)-glycerol + (9Z)-octadecenoate + H(+) = 1,2,3-tri-(9Z-octadecenoyl)-glycerol + H2O. It carries out the reaction 1,2,3-tri-(9Z-octadecenoyl)-glycerol + H2O = 1,3-di-(9Z-octadecenoyl)-glycerol + (9Z)-octadecenoate + H(+). The enzyme catalyses 1-(9Z-octadecenoyl)-glycerol + 1,3-di-(9Z-octadecenoyl)-glycerol = 1,2,3-tri-(9Z-octadecenoyl)-glycerol + glycerol. The catalysed reaction is 1-(9Z-octadecenoyl)-glycerol + 1,2-di-(9Z-octadecenoyl)-glycerol = 1,2,3-tri-(9Z-octadecenoyl)-glycerol + glycerol. It catalyses the reaction 2 1-(9Z-octadecenoyl)-glycerol = 1,2-di-(9Z-octadecenoyl)-glycerol + glycerol. It carries out the reaction 1,2,3-tri-(9Z-octadecenoyl)-glycerol + all-trans-retinol = all-trans-retinyl 9Z-octadecenoate + di-(9Z)-octadecenoylglycerol. The enzyme catalyses 1,2,3-tri-(9Z)-hexadecenoylglycerol + H2O = 1,3-di-(9Z)-hexadecenoylglycerol + (9Z)-hexadecenoate + H(+). The catalysed reaction is 1,2,3-tri-(9Z,12Z)-octadecadienoylglycerol + H2O = 1,3-di-(9Z,12Z)-octadecadienoylglycerol + (9Z,12Z)-octadecadienoate + H(+). It catalyses the reaction 1,2,3-tri-(9Z,12Z,15Z)-octadecatrienoylglycerol + H2O = 1,3-di-(9Z,12Z,15Z)-octadecatrienoylglycerol + (9Z,12Z,15Z)-octadecatrienoate + H(+). It carries out the reaction 1,3-di-(9Z)-octadecenoyl-2-hexadecanoylglycerol + H2O = 1,3-di-(9Z-octadecenoyl)-glycerol + hexadecanoate + H(+). The enzyme catalyses 1,2-di-(9Z)-octadecenoyl-3-hexadecanoyl-sn-glycerol + H2O = 1-(9Z)-octadecenoyl-3-hexadecanoyl-sn-glycerol + (9Z)-octadecenoate + H(+). The catalysed reaction is 1-hexadecanoyl-2,3-di-(9Z)-octadecenoyl-sn-glycerol + H2O = 1-hexadecanoyl-3-(9Z)-octadecenoyl-sn-glycerol + (9Z)-octadecenoate + H(+). It catalyses the reaction 1,2,3-tri-(9Z-octadecenoyl)-glycerol + H2O = 2,3-di-(9Z)-octadecenoyl-sn-glycerol + (9Z)-octadecenoate + H(+). It carries out the reaction 1,2,3-tri-(9Z)-hexadecenoylglycerol + H2O = 2,3-di-(9Z)-hexadecenoyl-sn-glycerol + (9Z)-hexadecenoate + H(+). The enzyme catalyses 1,2,3-tri-(9Z,12Z)-octadecadienoylglycerol + H2O = 2,3-di-(9Z,12Z)-octadecadienoyl-sn-glycerol + (9Z,12Z)-octadecadienoate + H(+). The catalysed reaction is 1,2,3-tri-(9Z,12Z,15Z)-octadecatrienoylglycerol + H2O = 2,3-di-(9Z,12Z,15Z)-octadecatrienoyl-sn-glycerol + (9Z,12Z,15Z)-octadecatrienoate + H(+). It catalyses the reaction 1,3-di-(9Z)-octadecenoyl-2-hexadecanoylglycerol + H2O = 2-hexadecanoyl-3-(9Z)-octadecenoyl-sn-glycerol + (9Z)-octadecenoate + H(+). It carries out the reaction 1-hexadecanoyl-2,3-di-(9Z)-octadecenoyl-sn-glycerol + H2O = 2,3-di-(9Z)-octadecenoyl-sn-glycerol + hexadecanoate + H(+). The enzyme catalyses 1,2-di-(9Z)-octadecenoyl-3-hexadecanoyl-sn-glycerol + H2O = 2-(9Z-octadecenoyl)-3-hexadecanoyl-sn-glycerol + (9Z)-octadecenoate + H(+). The catalysed reaction is a 1,2-diacyl-sn-glycero-3-phosphocholine + H2O = a 1-acyl-sn-glycero-3-phosphocholine + a fatty acid + H(+). It catalyses the reaction 1,2,3-tri-(9Z-octadecenoyl)-glycerol + 9-hydroxy-octadecanoate = 9-(9Z-octadecenoyloxy)-octadecanoate + 2,3-di-(9Z)-octadecenoyl-sn-glycerol. It carries out the reaction 1-hexadecanoyl-2,3-di-(9Z)-octadecenoyl-sn-glycerol + 9-hydroxy-octadecanoate = 9-hexadecanoyloxy-octadecanoate + 2,3-di-(9Z)-octadecenoyl-sn-glycerol. The enzyme catalyses 1,2,3-tri-(10Z)-heptadecenoylglycerol + 9-hydroxy-octadecanoate = 2,3-di-(10Z-heptadecenoyl)-sn-glycerol + 9-(10Z-heptadecenoyloxy)-octadecanoate. The catalysed reaction is 1,2,3-tri-(9Z,12Z)-octadecadienoylglycerol + 9-hydroxy-octadecanoate = 2,3-di-(9Z,12Z)-octadecadienoyl-sn-glycerol + 9-(9Z,12Z-octadecadienoyloxy)-octadecanoate. It catalyses the reaction 1,2,3-tri-(9Z)-hexadecenoylglycerol + 9-hydroxy-octadecanoate = 2,3-di-(9Z)-hexadecenoyl-sn-glycerol + 9-(9Z-hexadecenoyloxy)-octadecanoate. It carries out the reaction 9-hydroxy-octadecanoate + 1,2-di-(9Z-octadecenoyl)-sn-glycerol = 9-(9Z-octadecenoyloxy)-octadecanoate + 2-(9Z-octadecenoyl)-glycerol. The enzyme catalyses 1-hexadecanoyl-2,3-di-(9Z)-octadecenoyl-sn-glycerol + 9-hydroxy-octadecanoate = 1-hexadecanoyl-3-(9Z)-octadecenoyl-sn-glycerol + 9-(9Z-octadecenoyloxy)-octadecanoate. Its pathway is glycerolipid metabolism; triacylglycerol degradation. With respect to regulation, the triglyceride lipase activity is inhibited by BEL ((E)-6-(bromomethylene)-3-(1-naphthalenyl)-2H-tetrahydropyran-2-one), a suicide substrate inhibitor. No differences in the acylglycerol transacylase was detected in the presence or absence of ATP. Functionally, catalyzes the initial step in triglyceride hydrolysis in adipocyte and non-adipocyte lipid droplets. Exhibits a strong preference for the hydrolysis of long-chain fatty acid esters at the sn-2 position of the glycerol backbone and acts coordinately with LIPE/HLS and DGAT2 within the lipolytic cascade. Also possesses acylglycerol transacylase and phospholipase A2 activities. Transfers fatty acid from triglyceride to retinol, hydrolyzes retinylesters, and generates 1,3-diacylglycerol from triglycerides. Regulates adiposome size and may be involved in the degradation of adiposomes. Catalyzes the formation of an ester bond between hydroxy fatty acids and fatty acids derived from triglycerides or diglycerides to generate fatty acid esters of hydroxy fatty acids (FAHFAs) in adipocytes. Acts antagonistically with LDAH in regulation of cellular lipid stores. Inhibits LDAH-stimulated lipid droplet fusion. May play an important role in energy homeostasis. May play a role in the response of the organism to starvation, enhancing hydrolysis of triglycerides and providing free fatty acids to other tissues to be oxidized in situations of energy depletion. This is Patatin-like phospholipase domain-containing protein 2 from Homo sapiens (Human).